A 492-amino-acid chain; its full sequence is Solute carrier family 2, facilitated glucose transporter member 1 (492 aa).

Position 1 is an N-acetylmethionine (Met-1). Residues 1-11 lie on the Cytoplasmic side of the membrane; the sequence is MEPTSKKLTGR. Residues 12-33 form a helical membrane-spanning segment; sequence LMLAVGGAVLGSLQFGYNTGVI. Over 34 to 66 the chain is Extracellular; sequence NAPQKVIEEFYNQTWVQRYGEPIPPATLTTLWS. N-linked (GlcNAc...) asparagine glycosylation occurs at Asn-45. A helical transmembrane segment spans residues 67-87; that stretch reads LSVAIFSVGGMIGSFSVGLFV. Residues 88–90 are Cytoplasmic-facing; it reads NRF. A helical transmembrane segment spans residues 91–112; it reads GRRNSMLMMNLLAFVSAVLMGF. The Extracellular segment spans residues 113-120; that stretch reads SKLGKSFE. Residues 121-144 form a helical membrane-spanning segment; sequence MLILGRFIIGVYCGLTTGFVPMYV. Residues 145 to 155 lie on the Cytoplasmic side of the membrane; it reads GEVSPTELRGA. The chain crosses the membrane as a helical span at residues 156 to 176; that stretch reads LGTLHQLGIVVGILIAQVFGL. Gln-161 contacts D-glucose. Over 177-185 the chain is Extracellular; sequence DSIMGNQEL. The chain crosses the membrane as a helical span at residues 186-206; that stretch reads WPLLLSVIFIPALLQCILLPF. Over 207–271 the chain is Cytoplasmic; the sequence is CPESPRFLLI…LFRSAAYRQP (65 aa). Ser-226 bears the Phosphoserine mark. A helical membrane pass occupies residues 272 to 293; that stretch reads ILIAVVLQLSQQLSGINAVFYY. D-glucose-binding positions include 282-283 and Asn-288; that span reads QQ. At 294–306 the chain is on the extracellular side; sequence STSIFEKAGVQQP. Residues 307 to 328 form a helical membrane-spanning segment; sequence VYATIGSGIVNTAFTVVSLFVV. Asn-317 provides a ligand contact to D-glucose. Over 329-334 the chain is Cytoplasmic; the sequence is ERAGRR. Residues 335-355 traverse the membrane as a helical segment; it reads TLHLIGLAGMAGCAVLMTIAL. At 356-365 the chain is on the extracellular side; it reads ALLERLPWMS. Residues 366 to 388 form a helical membrane-spanning segment; it reads YLSIVAIFGFVAFFEVGPGPIPW. Glu-380 and Trp-388 together coordinate D-glucose. The Cytoplasmic segment spans residues 389–401; it reads FIVAELFSQGPRP. The chain crosses the membrane as a helical span at residues 402-422; it reads AAIAVAGFSNWTSNFIVGMCF. Residues 423–429 lie on the Extracellular side of the membrane; the sequence is QYVEQLC. A helical transmembrane segment spans residues 430-450; the sequence is GPYVFIIFTVLLVLFFIFTYF. Residues 451–492 lie on the Cytoplasmic side of the membrane; that stretch reads KVPETKGRTFDEIASGFRQGGASQSDKTPEELFHPLGADSQV. Ser-465 carries the phosphoserine modification. Positions 468–492 are disordered; that stretch reads RQGGASQSDKTPEELFHPLGADSQV. Residue Thr-478 is modified to Phosphothreonine. At Ser-490 the chain carries Phosphoserine.

Belongs to the major facilitator superfamily. Sugar transporter (TC 2.A.1.1) family. Glucose transporter subfamily. In terms of assembly, found in a complex with ADD2, DMTN and SLC2A1. Interacts (via C-terminus cytoplasmic region) with DMTN. Interacts with SNX27; the interaction is required when endocytosed to prevent degradation in lysosomes and promote recycling to the plasma membrane. Interacts with GIPC (via PDZ domain). Interacts with STOM. Interacts with SGTA (via Gln-rich region). Interacts with BSG. Interacts with SMIM43; the interaction may promote SLC2A1-mediated glucose transport to meet the energy needs of mesendoderm differentiation. In terms of processing, phosphorylation at Ser-226 by PKC promotes glucose uptake by increasing cell membrane localization. In terms of tissue distribution, detected in brain capillary (at protein level). Detected in brain capillary.

It localises to the cell membrane. It is found in the photoreceptor inner segment. It catalyses the reaction D-glucose(out) = D-glucose(in). With respect to regulation, the uptake of glucose is inhibited by cytochalasin B. Glucose uptake is increased in response to phorbol ester 12-O-tetradecanoylphorbol-13-acetate (TPA) treatment: TPA-induced glucose uptake requires phosphorylation at Ser-226. Functionally, facilitative glucose transporter, which is responsible for constitutive or basal glucose uptake. Has a very broad substrate specificity; can transport a wide range of aldoses including both pentoses and hexoses. Most important energy carrier of the brain: present at the blood-brain barrier and assures the energy-independent, facilitative transport of glucose into the brain. In association with BSG and NXNL1, promotes retinal cone survival by increasing glucose uptake into photoreceptors. Required for mesendoderm differentiation. This Bos taurus (Bovine) protein is Solute carrier family 2, facilitated glucose transporter member 1.